The chain runs to 865 residues: Protein fluG (865 aa).

Residues 442–533 (PGVKYVWTQF…VMTWWKSEQG (92 aa)) enclose the GS beta-grasp domain. The region spanning 540–865 (PRTNLLNINN…ARRKWLVERY (326 aa)) is the GS catalytic domain.

Belongs to the glutamine synthetase family.

It is found in the cytoplasm. Functionally, may function as a GSI-related enzyme in synthesizing a small diffusible factor that acts as an extracellular signal directing asexual sporulation and perhaps other aspects of colony growth. May be involved in brlA activation (an early transcriptional regulator for conidiation specific gene). The protein is Protein fluG (fluG) of Emericella nidulans (strain FGSC A4 / ATCC 38163 / CBS 112.46 / NRRL 194 / M139) (Aspergillus nidulans).